The chain runs to 441 residues: MSRMTVLSPSAGSQSACSLGLILVNPRRPLRSLSILFGLWKALIFLVIVICPGLGYDTSTSLLLYPTRDLSDVDPLHFPLSLRFVRWDSIYFVHAAEHGYVFEQEWAFGYGYTRLLALLASVLVLYRLSVNIFGGDTAKQKTLCFLSAALHIISPAGAFLSAPYGEALFSLLNISGLYLYSSSVLDAATNHRLSRDLKLLAAAVLISAATAVRSNGILGGVLFAYDALLQLPQILSRGLSLAVVSRLAVIVLGGCVIALGMAVPQYIAFNAFCMTSNAPRPWCGWTIPSIYRFVQEKYWNVGFLRYWVVPNIPLFLLAMPILALLLRSAFWAWRLPSVTSKFSENGANGALTKAMWLLPRLAIIQALLAVLAFTSYHVQIINRLSSGYPLWYWYLAAELISDFKNSQSTNKCISISAVAVQAIMIYGLIHAVLFGSFLPPA.

The next 10 helical transmembrane spans lie at 4–24, 35–55, 115–135, 143–163, 165–185, 199–223, 249–269, 306–326, 361–381, and 418–438; these read MTVL…LILV, ILFG…PGLG, LLAL…IFGG, LCFL…LSAP, GEAL…SSVL, LLAA…GVLF, VIVL…YIAF, YWVV…ALLL, LAII…VQII, and VAVQ…GSFL.

The protein belongs to the PIGV family.

The protein localises to the endoplasmic reticulum membrane. The protein operates within glycolipid biosynthesis; glycosylphosphatidylinositol-anchor biosynthesis. Mannosyltransferase involved in glycosylphosphatidylinositol-anchor biosynthesis. Transfers the second mannose to the glycosylphosphatidylinositol during GPI precursor assembly. The protein is GPI mannosyltransferase 2 (gpi18) of Aspergillus fumigatus (strain ATCC MYA-4609 / CBS 101355 / FGSC A1100 / Af293) (Neosartorya fumigata).